Here is a 1077-residue protein sequence, read N- to C-terminus: Error-prone DNA polymerase (1077 aa).

This sequence belongs to the DNA polymerase type-C family. DnaE2 subfamily.

Its subcellular location is the cytoplasm. It carries out the reaction DNA(n) + a 2'-deoxyribonucleoside 5'-triphosphate = DNA(n+1) + diphosphate. DNA polymerase involved in damage-induced mutagenesis and translesion synthesis (TLS). It is not the major replicative DNA polymerase. In Brucella suis biovar 1 (strain 1330), this protein is Error-prone DNA polymerase.